Consider the following 73-residue polypeptide: Conotoxin Im14.3 (73 aa).

The first 17 residues, 1–17 (MGVFRCCLAAALVVVCL), serve as a signal peptide directing secretion. Positions 18–35 (SRMGGTEPLESNHEDERR) are excised as a propeptide. The segment at 22 to 42 (GTEPLESNHEDERRADDTSGD) is disordered. Basic and acidic residues predominate over residues 27 to 38 (ESNHEDERRADD). The ShKT domain occupies 44–73 (CVDTNEDCVNWASTGQCEANPSYMRENCRK).

In terms of processing, contain 2 disulfide bonds. As to expression, expressed by the venom duct.

The protein resides in the secreted. In terms of biological role, probable neurotoxin. In Conus imperialis (Imperial cone), this protein is Conotoxin Im14.3.